Consider the following 343-residue polypeptide: E3 ubiquitin-protein ligase SP1 (343 aa).

A helical transmembrane segment spans residues 1–21 (MIPWGGVTCCLSAAALYLLGR). Residues 22 to 222 (SSGRDAEVLE…LISNLGKWSR (201 aa)) are Chloroplast intermembrane-facing. The chain crosses the membrane as a helical span at residues 223–244 (LYKYASMGFTVLGVFLITKHVI). Residues 245–343 (DSVLERRRRR…IDLAVKTYRH (99 aa)) lie on the Cytoplasmic side of the membrane. The RING-type zinc-finger motif lies at 296-331 (CVICLEQEYNAVFVPCGHMCCCTACSSHLTSCPLCR).

Interacts with TOC33, TOC75-3 and TOC159. Post-translationally, auto-ubiquitinated.

It is found in the plastid. Its subcellular location is the chloroplast outer membrane. The catalysed reaction is S-ubiquitinyl-[E2 ubiquitin-conjugating enzyme]-L-cysteine + [acceptor protein]-L-lysine = [E2 ubiquitin-conjugating enzyme]-L-cysteine + N(6)-ubiquitinyl-[acceptor protein]-L-lysine.. It participates in protein modification; protein ubiquitination. E3 ubiquitin-protein ligase involved in the regulation of protein import in the chloroplast. Associates with TOC complexes and mediates ubiquitination of TOC components, promoting their degradation via the ubiquitin-proteasome system (UPS). Plays a role in the reorganization of the TOC machinery. Involved in a mechanism that regulates plastid biogenesis via UPS. Promotes stress tolerance by depleting the chloroplast protein import apparatus, which limits photosystem assembly and the potential for reactive oxygen species (ROS) formation. May act as negative regulator of programmed cell death (PCD) during biotic stress. The sequence is that of E3 ubiquitin-protein ligase SP1 from Arabidopsis thaliana (Mouse-ear cress).